Consider the following 196-residue polypeptide: MTDEQVLAEFRAAEALLEGHFILSSGLRSSRYLQCARVLMNPARAARLAEALAFKIPDKLKIQLGSVVSPAMGGVIAGHEMGRALGLDAMFVERPDGVFHLRRGFRLEPGQKVLLMEDVVTTGLSSREAIKAVEEAGGQVIAAAALVDRSNGTADLGVPFYPLIRLDVPTYQPESLPPELAAIPAVKPGSRAAVAA.

117–125 (EDVVTTGLS) lines the 5-phospho-alpha-D-ribose 1-diphosphate pocket. Orotate contacts are provided by Thr121 and Arg149.

It belongs to the purine/pyrimidine phosphoribosyltransferase family. PyrE subfamily. As to quaternary structure, homodimer. It depends on Mg(2+) as a cofactor.

It catalyses the reaction orotidine 5'-phosphate + diphosphate = orotate + 5-phospho-alpha-D-ribose 1-diphosphate. The protein operates within pyrimidine metabolism; UMP biosynthesis via de novo pathway; UMP from orotate: step 1/2. Its function is as follows. Catalyzes the transfer of a ribosyl phosphate group from 5-phosphoribose 1-diphosphate to orotate, leading to the formation of orotidine monophosphate (OMP). This chain is Orotate phosphoribosyltransferase, found in Rhizorhabdus wittichii (strain DSM 6014 / CCUG 31198 / JCM 15750 / NBRC 105917 / EY 4224 / RW1) (Sphingomonas wittichii).